The sequence spans 365 residues: Chorismate synthase (365 aa).

Positions 48 and 54 each coordinate NADP(+). Residues 131–133 (RSS), 243–244 (NA), G288, 303–307 (KPTSS), and R329 contribute to the FMN site.

Belongs to the chorismate synthase family. Homotetramer. The cofactor is FMNH2.

It catalyses the reaction 5-O-(1-carboxyvinyl)-3-phosphoshikimate = chorismate + phosphate. Its pathway is metabolic intermediate biosynthesis; chorismate biosynthesis; chorismate from D-erythrose 4-phosphate and phosphoenolpyruvate: step 7/7. Catalyzes the anti-1,4-elimination of the C-3 phosphate and the C-6 proR hydrogen from 5-enolpyruvylshikimate-3-phosphate (EPSP) to yield chorismate, which is the branch point compound that serves as the starting substrate for the three terminal pathways of aromatic amino acid biosynthesis. This reaction introduces a second double bond into the aromatic ring system. The polypeptide is Chorismate synthase (Sinorhizobium medicae (strain WSM419) (Ensifer medicae)).